Reading from the N-terminus, the 711-residue chain is Origin recognition complex subunit 3 (711 aa).

A phosphoserine mark is found at Ser23 and Ser515.

This sequence belongs to the ORC3 family. As to quaternary structure, component of ORC, a complex composed of at least 6 subunits: ORC1, ORC2, ORC3, ORC4, ORC5 and ORC6. ORC is regulated in a cell-cycle dependent manner. It is sequentially assembled at the exit from anaphase of mitosis and disassembled as cells enter S phase. Post-translationally, multi-mono-ubiquitinated by OBI1; ubiquitination is important for efficient DNA replication origin site activation. Ubiquitination levels are low in mitotic and early G1-phAse cells and are induced in late G1-/early S-phase, peaking in S-phase and decrease toward the end of the cell cycle.

It is found in the nucleus. It localises to the chromosome. In terms of biological role, component of the origin recognition complex (ORC) that binds origins of replication. DNA-binding is ATP-dependent. The specific DNA sequences that define origins of replication have not been identified yet. ORC is required to assemble the pre-replication complex necessary to initiate DNA replication. Binds histone H3 and H4 trimethylation marks H3K9me3, H3K27me3 and H4K20me3. The sequence is that of Origin recognition complex subunit 3 (Orc3) from Rattus norvegicus (Rat).